A 170-amino-acid chain; its full sequence is 3-hydroxydecanoyl-[acyl-carrier-protein] dehydratase (170 aa).

Residue His71 is part of the active site.

This sequence belongs to the thioester dehydratase family. FabA subfamily. In terms of assembly, homodimer.

Its subcellular location is the cytoplasm. The catalysed reaction is a (3R)-hydroxyacyl-[ACP] = a (2E)-enoyl-[ACP] + H2O. It catalyses the reaction (3R)-hydroxydecanoyl-[ACP] = (2E)-decenoyl-[ACP] + H2O. It carries out the reaction (2E)-decenoyl-[ACP] = (3Z)-decenoyl-[ACP]. It functions in the pathway lipid metabolism; fatty acid biosynthesis. Functionally, necessary for the introduction of cis unsaturation into fatty acids. Catalyzes the dehydration of (3R)-3-hydroxydecanoyl-ACP to E-(2)-decenoyl-ACP and then its isomerization to Z-(3)-decenoyl-ACP. Can catalyze the dehydratase reaction for beta-hydroxyacyl-ACPs with saturated chain lengths up to 16:0, being most active on intermediate chain length. The protein is 3-hydroxydecanoyl-[acyl-carrier-protein] dehydratase of Chelativorans sp. (strain BNC1).